Consider the following 112-residue polypeptide: DNA-binding protein Memar_1972 (112 aa).

The interval 14–35 (MEQMQRQAMDQQGMEEEAARQQ) is disordered.

This sequence belongs to the PDCD5 family.

The chain is DNA-binding protein Memar_1972 from Methanoculleus marisnigri (strain ATCC 35101 / DSM 1498 / JR1).